The sequence spans 461 residues: pre-mRNA splicing regulator USH1G (461 aa).

3 ANK repeats span residues 31 to 60 (DGMT…DPDK), 64 to 93 (WGNT…NIWC), and 97 to 126 (DYHT…KQSS). 2 disordered regions span residues 208 to 243 (GTAR…SARS) and 332 to 368 (EDGG…DRSC). Positions 210 to 222 (ARGKTKMQKKLER) are enriched in basic residues. Residues 385–447 (LEPETSPLET…KILGAVRRRR (63 aa)) enclose the SAM domain. S422 bears the Phosphoserine; by CK2 mark.

In terms of assembly, part of a complex composed of USH1C, USH1G and MYO7A. Interacts with USH1C (via the first PDZ domain). Interacts with PDZD7. Interacts with CDH23 and PCDH15; these interactions may recruit USH1G to the plasma membrane. Interacts with intraflagellar transport proteins IFT20, IFT52 and IFT57. Interacts with splicing factors SF3B1, PRPF6, PRPF31 and SON. Interacts with the U4/U6.U5 tri-small nuclear ribonucleoprotein (tri-snRNP) complex in the presence of pre-mRNAs. Interacts (via SAM domain) with MAGI2 (via PDZ 6 domain); the interaction is triggered by phosphorylation of USH1G by CK2 and negatively regulates MAGI2-mediated endocytosis. Expressed in vestibule of the inner ear, eye and small intestine.

The protein localises to the cytoplasm. Its subcellular location is the cytosol. It localises to the cytoskeleton. The protein resides in the cell membrane. It is found in the cell projection. The protein localises to the cilium. Its subcellular location is the nucleus speckle. It localises to the nucleus. The protein resides in the cajal body. It is found in the microtubule organizing center. The protein localises to the centrosome. Its subcellular location is the photoreceptor inner segment. Functionally, plays a role in pre-mRNA splicing by regulating the release and transfer of U4/U6.U5 tri-small nuclear ribonucleoprotein (tri-snRNP) complexes from their assembly site in Cajal bodies to nuclear speckles, thereby contributing to the assembly of the pre-catalytic spliceosome on target pre-mRNAs. May also participate in recycling of snRNPs back to Cajal bodies during splicing. Plays a role in regulating MAGI2-mediated endocytosis. Anchoring/scaffolding protein that is a part of the functional network formed by USH1C, USH1G, CDH23 and MYO7A that mediates mechanotransduction in cochlear hair cells. Required for normal development and maintenance of cochlear hair cell bundles. Required for normal hearing. The polypeptide is pre-mRNA splicing regulator USH1G (USH1G) (Homo sapiens (Human)).